A 120-amino-acid chain; its full sequence is NAD(P)H-quinone oxidoreductase subunit 3, chloroplastic (120 aa).

The next 3 helical transmembrane spans lie at 9-29 (IFWAFLIISSVIPILAFLFSG), 64-84 (MFALVFVVFDVETVFLYPWAM), and 88-108 (ILGVSVFIEALIFVLILIVGL).

This sequence belongs to the complex I subunit 3 family. In terms of assembly, NDH is composed of at least 16 different subunits, 5 of which are encoded in the nucleus.

Its subcellular location is the plastid. The protein resides in the chloroplast thylakoid membrane. The enzyme catalyses a plastoquinone + NADH + (n+1) H(+)(in) = a plastoquinol + NAD(+) + n H(+)(out). It catalyses the reaction a plastoquinone + NADPH + (n+1) H(+)(in) = a plastoquinol + NADP(+) + n H(+)(out). Its function is as follows. NDH shuttles electrons from NAD(P)H:plastoquinone, via FMN and iron-sulfur (Fe-S) centers, to quinones in the photosynthetic chain and possibly in a chloroplast respiratory chain. The immediate electron acceptor for the enzyme in this species is believed to be plastoquinone. Couples the redox reaction to proton translocation, and thus conserves the redox energy in a proton gradient. The sequence is that of NAD(P)H-quinone oxidoreductase subunit 3, chloroplastic from Spinacia oleracea (Spinach).